The following is a 130-amino-acid chain: Small ribosomal subunit protein bS6 (130 aa).

The tract at residues 100 to 130 is disordered; sequence SPMVKAKDERRERREDFAEAGDDVDAGDSEE. Positions 104–116 are enriched in basic and acidic residues; the sequence is KAKDERRERREDF. The span at 117 to 130 shows a compositional bias: acidic residues; it reads AEAGDDVDAGDSEE.

Belongs to the bacterial ribosomal protein bS6 family.

Binds together with bS18 to 16S ribosomal RNA. This chain is Small ribosomal subunit protein bS6, found in Pectobacterium carotovorum subsp. carotovorum (strain PC1).